The following is a 366-amino-acid chain: Ribosome-binding ATPase YchF (366 aa).

One can recognise an OBG-type G domain in the interval 3–259; that stretch reads LTAGIVGLPN…LEGEEKQMFL (257 aa). Residue 12–17 coordinates ATP; the sequence is NVGKST. Positions 16 and 36 each coordinate Mg(2+). The TGS domain occupies 281-364; it reads GLATYFTAGE…QDGDVIHFRF (84 aa).

This sequence belongs to the TRAFAC class OBG-HflX-like GTPase superfamily. OBG GTPase family. YchF/OLA1 subfamily. Mg(2+) is required as a cofactor.

Functionally, ATPase that binds to both the 70S ribosome and the 50S ribosomal subunit in a nucleotide-independent manner. This is Ribosome-binding ATPase YchF from Bacillus subtilis (strain 168).